A 126-amino-acid chain; its full sequence is Methylglyoxal synthase (126 aa).

An MGS-like domain is found at 1-126 (MEKKIALIAH…LIKGLESLIF (126 aa)). Substrate contacts are provided by residues His-10, Lys-14, 36–39 (TGTT), and 56–57 (SG). The active-site Proton donor/acceptor is Asp-62. Position 89 (His-89) interacts with substrate.

It belongs to the methylglyoxal synthase family.

It catalyses the reaction dihydroxyacetone phosphate = methylglyoxal + phosphate. In terms of biological role, catalyzes the formation of methylglyoxal from dihydroxyacetone phosphate. The protein is Methylglyoxal synthase of Borreliella burgdorferi (strain ATCC 35210 / DSM 4680 / CIP 102532 / B31) (Borrelia burgdorferi).